The sequence spans 541 residues: MPTELQTELAEAVEARRNFAIISHPDAGKTTLTEKLLLYGGAIHEAGAVKARRAQRHATSDWMEMEQQRGISITSTVLQFAYQHCQINLLDTPGHQDFSEDTYRTLAAADNAVMLVDAAKGLEPQTRKLFEVCKLRSLPIFTFINKLDRPGREPLELLDEIEQELGLQTYAVNWPIGMGDRFQGVFDRRSRKIHLFQRSDHGKREAIDTQIDLGDPQIESLLDQELYFQLKDELELIEELGSPLDLEQVHNGQMTPIFFGSAMTNFGVELFLEAFLDYALKPGAYESTQGTIEPTYEDFSGFVFKLQANMDPKHRDRVAFIRVCSGKFEKDMTVSHARTGKTIRLSRPQKLFAQGRNSLEEAYPGDIIGLNNPGVFAIGDTIFKGKKLAYEGIPCFSPELFAYLKNPNPSKFKQFQKGVSELREEGAVQIMYSEDEIKRDPILAAVGQLQFEVVQFRLQNEYGVETRLELLPYSVARWVKGGWSALESVGRIFNAITVKDSWGRPVLLFKNEWNLHQVHGDHPDLELSAIAPLAVDQNMVS.

In terms of domain architecture, tr-type G spans 14–283 (EARRNFAIIS…AFLDYALKPG (270 aa)). Residues 23–30 (SHPDAGKT), 91–95 (DTPGH), and 145–148 (NKLD) each bind GTP.

It belongs to the TRAFAC class translation factor GTPase superfamily. Classic translation factor GTPase family. PrfC subfamily.

It localises to the cytoplasm. Its function is as follows. Increases the formation of ribosomal termination complexes and stimulates activities of RF-1 and RF-2. It binds guanine nucleotides and has strong preference for UGA stop codons. It may interact directly with the ribosome. The stimulation of RF-1 and RF-2 is significantly reduced by GTP and GDP, but not by GMP. This is Peptide chain release factor 3 from Acaryochloris marina (strain MBIC 11017).